Consider the following 332-residue polypeptide: Phosphate acyltransferase (332 aa).

Belongs to the PlsX family. Homodimer. Probably interacts with PlsY.

The protein resides in the cytoplasm. It carries out the reaction a fatty acyl-[ACP] + phosphate = an acyl phosphate + holo-[ACP]. The protein operates within lipid metabolism; phospholipid metabolism. Catalyzes the reversible formation of acyl-phosphate (acyl-PO(4)) from acyl-[acyl-carrier-protein] (acyl-ACP). This enzyme utilizes acyl-ACP as fatty acyl donor, but not acyl-CoA. This chain is Phosphate acyltransferase, found in Caldanaerobacter subterraneus subsp. tengcongensis (strain DSM 15242 / JCM 11007 / NBRC 100824 / MB4) (Thermoanaerobacter tengcongensis).